The following is a 295-amino-acid chain: MSVSRMIPRLVRASASPMAVPTAFRRSFGSSVVCAKDNDGPRGPSTPSTAPEYRQNQTSKPPNQFMPNSTSTMTNDYPKVGEKASPPELLNSVDPNYRPADPYSGKVQHFTGGRQEPGAQKPELGLGEMEGITFKVEPLQRSGEDTTTMRARLLYQSRKRGILESDLLLSTFADVYLAKMNHEQLQEYDRFLDENDWDIYYWATQDAPEEGTPAEDTPTETWQRTGAKSGEWRQTIGAFKAAYRPVPTRWADSEVLRLLREHVRDNSATGFHAAKNKKTGGSGLGRMPNIQVFDS.

Disordered stretches follow at residues 35–90 (AKDN…PELL), 208–227 (PEEG…RTGA), and 269–295 (TGFH…VFDS). The span at 45 to 75 (STPSTAPEYRQNQTSKPPNQFMPNSTSTMTN) shows a compositional bias: polar residues.

This sequence belongs to the SDHAF2 family. In terms of assembly, interacts with the flavoprotein subunit within the SDH catalytic dimer.

It is found in the mitochondrion matrix. In terms of biological role, plays an essential role in the assembly of succinate dehydrogenase (SDH), an enzyme complex (also referred to as respiratory complex II) that is a component of both the tricarboxylic acid (TCA) cycle and the mitochondrial electron transport chain, and which couples the oxidation of succinate to fumarate with the reduction of ubiquinone (coenzyme Q) to ubiquinol. Required for flavinylation (covalent attachment of FAD) of the flavoprotein subunit of the SDH catalytic dimer. In Aspergillus terreus (strain NIH 2624 / FGSC A1156), this protein is Succinate dehydrogenase assembly factor 2, mitochondrial.